The chain runs to 1745 residues: Collagen alpha-3(V) chain (1745 aa).

The first 29 residues, 1–29 (MGNRRDLGQPRAGLCLLLAALQLLPGTQA), serve as a signal peptide directing secretion. The Laminin G-like domain maps to 62 to 224 (DRAFRIGQAS…QACERYLPDC (163 aa)). N-linked (GlcNAc...) asparagine glycans are attached at residues Asn-102 and Asn-141. Positions 211–391 (QAAFQACERY…AVIEKGQQFE (181 aa)) are nonhelical region. Disordered regions lie at residues 230–304 (AATV…TPTP), 322–362 (RSLD…EYPS), 387–439 (GQQF…RGPP), and 476–1492 (SMKG…PAEL). The span at 244-267 (PRRKGKGKGRKKGRGRKGKGRKKN) shows a compositional bias: basic residues. Ser-349 carries O-linked (Xyl...) (chondroitin sulfate) serine glycosylation. Collagen-like domains follow at residues 391–440 (EGPP…GPPG) and 482–538 (GPVG…DGAR). The tract at residues 392 to 1489 (GPPGAPGPQG…AGPPGPPGAP (1098 aa)) is triple-helical region. Positions 406-424 (SGPPGPPGFPGDPGPPGPA) are enriched in pro residues. Composition is skewed to low complexity over residues 426 to 439 (LPGI…RGPP), 489 to 499 (RPGPVGLPGHP), and 597 to 619 (EPGP…PGVT). The segment covering 724–733 (QGEKGEKGED) has biased composition (basic and acidic residues). Positions 765–792 (PKGQAGQAGEEGPPGSAGEKGKLGVPGL) are enriched in low complexity. Collagen-like domains follow at residues 824–877 (GQPG…QGPP), 905–950 (GFQG…GLPG), and 951–989 (LEGR…GDPG). Positions 967-979 (LGKEGPAGLRGFP) are enriched in low complexity. The segment covering 1016 to 1025 (GPAGGIGLPG) has biased composition (gly residues). Composition is skewed to low complexity over residues 1116-1126 (ADGAQGRRGPP) and 1141-1152 (VGVIGPPGLQGL). Over residues 1190–1199 (GLPGGVGQPG) the composition is skewed to gly residues. Pro residues predominate over residues 1213–1222 (PGPPGAPGIP). A compositionally biased stretch (low complexity) spans 1234–1243 (SGPSGAAGPP). Residues 1318-1330 (MGREGREGEKGAK) are compositionally biased toward basic and acidic residues. Residues 1405–1416 (IGLIGLIGPPGE) are compositionally biased toward low complexity. Over residues 1429–1443 (QGPPGPKGDPGPPGP) the composition is skewed to pro residues. A Collagen-like 6 domain is found at 1430-1488 (GPPGPKGDPGPPGPIGSLGHPGPPGVAGPLGQKGSKGSPGSMGPRGDTGPAGPPGPPGA). Residues 1458-1479 (PLGQKGSKGSPGSMGPRGDTGP) are compositionally biased toward low complexity. Residues 1514 to 1744 (EEVLASLTSL…GFELGPVCFS (231 aa)) enclose the Fibrillar collagen NC1 domain. Disulfide bonds link Cys-1585-Cys-1742 and Cys-1651-Cys-1696.

The protein belongs to the fibrillar collagen family. As to quaternary structure, trimers of two alpha 1(V) and one alpha 2(V) chains in most tissues and trimers of one alpha 1(V), one alpha 2(V), and one alpha 3(V) chains in placenta. In terms of processing, prolines at the third position of the tripeptide repeating unit (G-X-Y) are hydroxylated in some or all of the chains. In terms of tissue distribution, detected in fibroblasts (at protein level). Detected in urine (at protein level).

It localises to the secreted. It is found in the extracellular space. Its subcellular location is the extracellular matrix. In terms of biological role, type V collagen is a member of group I collagen (fibrillar forming collagen). It is a minor connective tissue component of nearly ubiquitous distribution. Type V collagen binds to DNA, heparan sulfate, thrombospondin, heparin, and insulin. The polypeptide is Collagen alpha-3(V) chain (COL5A3) (Homo sapiens (Human)).